Reading from the N-terminus, the 330-residue chain is D-lactate dehydrogenase (330 aa).

NAD(+) is bound by residues 156–157 (RI), aspartate 176, 206–207 (VP), 233–235 (AAR), and aspartate 259. Residue arginine 235 is part of the active site. Glutamate 264 is a catalytic residue. The Proton donor role is filled by histidine 296.

It belongs to the D-isomer specific 2-hydroxyacid dehydrogenase family.

It catalyses the reaction (R)-lactate + NAD(+) = pyruvate + NADH + H(+). In Staphylococcus aureus, this protein is D-lactate dehydrogenase (ldhD).